The chain runs to 442 residues: Tubby-related protein 3 (442 aa).

The segment at Met-23–Gln-68 is required for association with the IFT complex A (IFT-A). The segment at Pro-101 to Pro-177 is disordered. A compositionally biased stretch (polar residues) spans Gly-145–Asn-162. Low complexity predominate over residues Ser-163–Ala-175.

The protein belongs to the TUB family. Associates with the IFT complex A (IFT-A). Interacts with SIRT1. In terms of tissue distribution, expressed at high levels in testis, ovaries, thyroid, and spinal cord.

The protein resides in the nucleus. Its subcellular location is the cell membrane. The protein localises to the cell projection. It is found in the cilium. It localises to the cytoplasm. The protein resides in the secreted. Its function is as follows. Negative regulator of the Shh signaling transduction pathway: recruited to primary cilia via association with the IFT complex A (IFT-A) and is required for recruitment of G protein-coupled receptor GPR161 to cilia, a promoter of PKA-dependent basal repression machinery in Shh signaling. Binds to phosphorylated inositide (phosphoinositide) lipids. Both IFT-A- and phosphoinositide-binding properties are required to regulate ciliary G protein-coupled receptor trafficking. During adipogenesis, regulates ciliary trafficking of FFAR4 in preadipocytes. This Homo sapiens (Human) protein is Tubby-related protein 3.